The chain runs to 459 residues: Phosphoglucosamine mutase (459 aa).

The active-site Phosphoserine intermediate is the Ser-112. Mg(2+)-binding residues include Ser-112, Asp-249, Asp-251, and Asp-253. The residue at position 112 (Ser-112) is a Phosphoserine.

The protein belongs to the phosphohexose mutase family. The cofactor is Mg(2+). Post-translationally, activated by phosphorylation.

It carries out the reaction alpha-D-glucosamine 1-phosphate = D-glucosamine 6-phosphate. In terms of biological role, catalyzes the conversion of glucosamine-6-phosphate to glucosamine-1-phosphate. In Synechococcus sp. (strain RCC307), this protein is Phosphoglucosamine mutase.